Reading from the N-terminus, the 283-residue chain is Zinc-finger homeodomain protein 8 (283 aa).

The ZF-HD dimerization-type; degenerate zinc finger occupies 23–68; the sequence is YKECMRNHAAAMGGQAFDGCGEYMPASPDSLKCAACGCHRSFHRRA. 2 disordered regions span residues 131-171 and 244-283; these read AGRA…TKFT and GLGTGLGTGISGDGDGDDDDTDDSPPRAAVSSPSPSPISV. Gly residues predominate over residues 148 to 161; it reads GSAGGSGSGGGGIF. The homeobox DNA-binding region spans 163–226; that stretch reads RKRFRTKFTP…NHKNQLASSP (64 aa). Residues 244 to 256 are compositionally biased toward gly residues; that stretch reads GLGTGLGTGISGD. Residues 257–266 are compositionally biased toward acidic residues; sequence GDGDDDDTDD. Residues 269-283 show a composition bias toward low complexity; sequence PRAAVSSPSPSPISV.

Homo- and heterodimer with other ZFHD proteins.

It localises to the nucleus. Putative transcription factor. In Oryza sativa subsp. japonica (Rice), this protein is Zinc-finger homeodomain protein 8 (ZHD8).